Consider the following 451-residue polypeptide: Phosphoglucosamine mutase (451 aa).

Ser101 acts as the Phosphoserine intermediate in catalysis. Residues Ser101, Asp240, Asp242, and Asp244 each coordinate Mg(2+). A Phosphoserine modification is found at Ser101.

This sequence belongs to the phosphohexose mutase family. Mg(2+) is required as a cofactor. Activated by phosphorylation.

It catalyses the reaction alpha-D-glucosamine 1-phosphate = D-glucosamine 6-phosphate. In terms of biological role, catalyzes the conversion of glucosamine-6-phosphate to glucosamine-1-phosphate. The sequence is that of Phosphoglucosamine mutase from Streptococcus pyogenes serotype M2 (strain MGAS10270).